Consider the following 304-residue polypeptide: Ribonuclease Z (304 aa).

His63, His65, Asp67, His68, His141, Asp208, and His266 together coordinate Zn(2+). The active-site Proton acceptor is Asp67.

It belongs to the RNase Z family. Homodimer. Requires Zn(2+) as cofactor.

It carries out the reaction Endonucleolytic cleavage of RNA, removing extra 3' nucleotides from tRNA precursor, generating 3' termini of tRNAs. A 3'-hydroxy group is left at the tRNA terminus and a 5'-phosphoryl group is left at the trailer molecule.. In terms of biological role, zinc phosphodiesterase, which displays some tRNA 3'-processing endonuclease activity. Probably involved in tRNA maturation, by removing a 3'-trailer from precursor tRNA. This chain is Ribonuclease Z, found in Chlamydia muridarum (strain MoPn / Nigg).